The following is a 347-amino-acid chain: NADH-quinone oxidoreductase subunit H (347 aa).

Helical transmembrane passes span 13 to 33 (LIIA…VAYL), 50 to 70 (PNVV…KFVF), 82 to 102 (GVFL…WAVI), 115 to 135 (VGIL…IMGG), 161 to 181 (IGFV…TDIV), 198 to 218 (FLDW…ISAL), 248 to 268 (FLLF…LMTV), 286 to 306 (VPGI…FAMV), and 325 to 345 (VFLP…KVFG).

It belongs to the complex I subunit 1 family. As to quaternary structure, NDH-1 is composed of 14 different subunits. Subunits NuoA, H, J, K, L, M, N constitute the membrane sector of the complex.

The protein resides in the cell inner membrane. The enzyme catalyses a quinone + NADH + 5 H(+)(in) = a quinol + NAD(+) + 4 H(+)(out). Functionally, NDH-1 shuttles electrons from NADH, via FMN and iron-sulfur (Fe-S) centers, to quinones in the respiratory chain. The immediate electron acceptor for the enzyme in this species is believed to be ubiquinone. Couples the redox reaction to proton translocation (for every two electrons transferred, four hydrogen ions are translocated across the cytoplasmic membrane), and thus conserves the redox energy in a proton gradient. This subunit may bind ubiquinone. This is NADH-quinone oxidoreductase subunit H from Brucella abortus (strain 2308).